We begin with the raw amino-acid sequence, 485 residues long: MFSWANIGSNEYLPLKNDRKAYLNQWAKRSGLAIAAICILGILILAIVKLFCFKAIIFPIVGGSFNNGTNVFQSTVIVISLDGFRADYLYRGFTPNLLSLAERNVHVPFLIPSFPSITFPNHYTIVTGLYPESHGIVSNNFFDPVTGKQFVNSMPECNKDPTWWDKGEPIWVNAERNNVRSAVHMWPGNEVENHGYRPTYSDGFNFDTTLREKKDRILEWLDLPDKDRPQLLLAYAPHVDMVGHAFGPDSPELNIIIQEVDIVIGELIEGLKKRNIDKHVNIIFLSDHGMAPTSDNRLIWLDNMFNLSAVAHRDAWPLGGFRGESDLDDEYIYESLVNYSRSSLPSAENWNVYSKKDIPSRWHYSNNERIAPVWMIPDVGWSLVSMLDHSPELEYEPLGVHGYDNLSPVMRALFIASGSSFKNFKGKKLAPFQNTEIYGILSHILDLPAQPNNGTYEGALPLRRNRNSTKEWLLKDIEQAYSKLI.

At 1-30 the chain is on the cytoplasmic side; it reads MFSWANIGSNEYLPLKNDRKAYLNQWAKRS. Residues 31-51 form a helical membrane-spanning segment; it reads GLAIAAICILGILILAIVKLF. At 52 to 485 the chain is on the extracellular side; that stretch reads CFKAIIFPIV…DIEQAYSKLI (434 aa). Asn67 is a glycosylation site (N-linked (GlcNAc...) asparagine). Positions 74–404 are phosphodiesterase; it reads STVIVISLDG…YEPLGVHGYD (331 aa). The Nucleophile role is filled by Thr118. 4 N-linked (GlcNAc...) asparagine glycosylation sites follow: Asn306, Asn338, Asn453, and Asn467.

This sequence belongs to the nucleotide pyrophosphatase/phosphodiesterase family.

Its subcellular location is the membrane. This is an uncharacterized protein from Schizosaccharomyces pombe (strain 972 / ATCC 24843) (Fission yeast).